The sequence spans 87 residues: Cell division protein FtsL (87 aa).

Residues 1 to 3 lie on the Cytoplasmic side of the membrane; it reads MSR. The helical transmembrane segment at 4-23 threads the bilayer; that stretch reads LLLIVLLACSIASAIGVVYM. The Periplasmic portion of the chain corresponds to 24–87; sequence RHMHRKLFVQ…ETSDIVVIRP (64 aa).

This sequence belongs to the FtsL family. As to quaternary structure, part of a complex composed of FtsB, FtsL and FtsQ.

It localises to the cell inner membrane. In terms of biological role, essential cell division protein. May link together the upstream cell division proteins, which are predominantly cytoplasmic, with the downstream cell division proteins, which are predominantly periplasmic. The sequence is that of Cell division protein FtsL from Xanthomonas campestris pv. campestris (strain ATCC 33913 / DSM 3586 / NCPPB 528 / LMG 568 / P 25).